Here is a 907-residue protein sequence, read N- to C-terminus: Phototropin-2 (907 aa).

The tract at residues 28–84 (ATAGLEIVAEDAPSGSSGAHQQQAWRPVAPATAGRDSGGTGSGKSSVDGGVGRASHD) is disordered. Residues 41-51 (SGSSGAHQQQA) are compositionally biased toward polar residues. One can recognise a PAS 1 domain in the interval 89–162 (VSQELKDALS…AKIRDAVKHG (74 aa)). Residues 138 to 143 (NCRFLQ), Arg-156, Asn-171, Asn-181, and Gln-202 each bind FMN. Residue Cys-139 is modified to S-4a-FMN cysteine. A PAC 1 domain is found at 163–217 (RSFCGRLLNYRKDGAPFWNLLTVTPIRDDNGKVIKFIGMQVEVSKYTEGLSDKRM). Residues 332-363 (RSSVGSREAPAVVEEPAPAPPPAPEVVERTDS) are disordered. The PAS 2 domain maps to 375-448 (QGIDLATTLE…DKIREAIREQ (74 aa)). Residues 424-429 (NCRFLQ), Arg-442, Asn-457, Asn-467, and Gln-488 contribute to the FMN site. Position 425 is an S-4a-FMN cysteine (Cys-425). The region spanning 449 to 503 (KEITVQLINYTKSGKKFWNLFHLQPMRDQKGELQYFIGVQLDGSDHVEPLRNRLS) is the PAC 2 domain. In terms of domain architecture, Protein kinase spans 576-863 (FKPVKPLGCG…ANDIKQHSFF (288 aa)). Residues 582 to 590 (LGCGDTGSV) and Lys-605 contribute to the ATP site. Asp-701 (proton acceptor) is an active-site residue.

Belongs to the protein kinase superfamily. Ser/Thr protein kinase family. Homodimer. FMN is required as a cofactor. In terms of processing, autophosphorylated in response to blue light irradiation. 2 molecules of FMN bind covalently to cysteines after exposure to blue light and are reversed in the dark. In terms of tissue distribution, expressed at low levels in leaves of dark-grown seedlings.

It carries out the reaction L-seryl-[protein] + ATP = O-phospho-L-seryl-[protein] + ADP + H(+). The catalysed reaction is L-threonyl-[protein] + ATP = O-phospho-L-threonyl-[protein] + ADP + H(+). Protein kinase that acts as a blue light photoreceptor in a signal-transduction pathway for phototropic responses. Regulates a wide range of physiological activities in plants that maximize the efficiency of photosynthesis, such as chloroplast relocations, stomata opening, and leaf expansion. This is Phototropin-2 (PHOT2) from Oryza sativa subsp. japonica (Rice).